Here is a 410-residue protein sequence, read N- to C-terminus: MQQRNRLEPYFENLVFERDDNKMVVNFGPQHPSAHGQLRLILEMDGEQITKAVPDIGYLHRGMEKMGENMIYNEFLPTTDRMDYIAATSNNYAFALAVERLLGIEDKVPRRAKVIRMILLELNRIISHLFWLATHALDVGAMSVFLYCFREREYAMDLIEDYCGARLTHSSVRIGGVPLDLPEGWLDRLNVYLNNLPDQIKLYEGLLTENRIWRMRLEEVGVIPPEMAKQWACSGIMLRGSGIEYDIRKEEPYELYDEVDFDIPVSDRCDSYGRYLLYMEEMRQSIRIIRQLIPMYKETEPQLMAHAPEYISAHKEDIMTQNYSLMQHFVLVTQGMRPPVGEVYVPTESPKGELGFFIRSEGEPYPYRLKIRAPSFWHTGILQDLLPGHYLADVVTIIGSTNIVFGEIDR.

This sequence belongs to the complex I 49 kDa subunit family. As to quaternary structure, NDH-1 is composed of 14 different subunits. Subunits NuoB, C, D, E, F, and G constitute the peripheral sector of the complex.

It is found in the cell inner membrane. It carries out the reaction a quinone + NADH + 5 H(+)(in) = a quinol + NAD(+) + 4 H(+)(out). NDH-1 shuttles electrons from NADH, via FMN and iron-sulfur (Fe-S) centers, to quinones in the respiratory chain. The immediate electron acceptor for the enzyme in this species is believed to be ubiquinone. Couples the redox reaction to proton translocation (for every two electrons transferred, four hydrogen ions are translocated across the cytoplasmic membrane), and thus conserves the redox energy in a proton gradient. The protein is NADH-quinone oxidoreductase subunit D of Nitratiruptor sp. (strain SB155-2).